The chain runs to 222 residues: Superoxide dismutase [Mn], mitochondrial (222 aa).

The N-terminal 24 residues, 1–24 (MLSRAACSTSRRLVPALSVLGSRQ), are a transit peptide targeting the mitochondrion. Residue His50 coordinates Mn(2+). Residue Tyr58 is modified to 3'-nitrotyrosine. Residues Lys68 and Lys75 each carry the N6-acetyllysine; alternate modification. N6-succinyllysine; alternate occurs at positions 68 and 75. His98 is a binding site for Mn(2+). Lys122 and Lys130 each carry N6-acetyllysine; alternate. N6-succinyllysine; alternate is present on residues Lys122 and Lys130. 2 residues coordinate Mn(2+): Asp183 and His187. Lys202 carries the N6-acetyllysine modification.

It belongs to the iron/manganese superoxide dismutase family. Homotetramer. Mn(2+) serves as cofactor. In terms of processing, nitrated under oxidative stress. Nitration coupled with oxidation inhibits the catalytic activity. Acetylation at Lys-122 decreases enzymatic activity. Deacetylated by SIRT3 upon exposure to ionizing radiations or after long fasting. Post-translationally, polyubiquitinated; leading to proteasomal degradation. Deubiquitinated by USP36 which increases protein stability.

The protein localises to the mitochondrion matrix. It carries out the reaction 2 superoxide + 2 H(+) = H2O2 + O2. Functionally, destroys superoxide anion radicals which are normally produced within the cells and which are toxic to biological systems. The polypeptide is Superoxide dismutase [Mn], mitochondrial (SOD2) (Bos taurus (Bovine)).